A 61-amino-acid chain; its full sequence is Small ribosomal subunit protein uS14C (61 aa).

4 residues coordinate Zn(2+): Cys-24, Cys-27, Cys-40, and Cys-43.

Belongs to the universal ribosomal protein uS14 family. Zinc-binding uS14 subfamily. In terms of assembly, part of the 30S ribosomal subunit. Contacts proteins S3 and S10. Zn(2+) serves as cofactor.

In terms of biological role, binds 16S rRNA, required for the assembly of 30S particles and may also be responsible for determining the conformation of the 16S rRNA at the A site. The protein is Small ribosomal subunit protein uS14C of Enterococcus faecalis (strain ATCC 700802 / V583).